The chain runs to 311 residues: Aspartate carbamoyltransferase catalytic subunit (311 aa).

Residues R55 and T56 each coordinate carbamoyl phosphate. K83 provides a ligand contact to L-aspartate. Positions 105, 134, and 137 each coordinate carbamoyl phosphate. R167 and R226 together coordinate L-aspartate. Carbamoyl phosphate contacts are provided by G267 and P268.

This sequence belongs to the aspartate/ornithine carbamoyltransferase superfamily. ATCase family. In terms of assembly, heterododecamer (2C3:3R2) of six catalytic PyrB chains organized as two trimers (C3), and six regulatory PyrI chains organized as three dimers (R2).

It carries out the reaction carbamoyl phosphate + L-aspartate = N-carbamoyl-L-aspartate + phosphate + H(+). It participates in pyrimidine metabolism; UMP biosynthesis via de novo pathway; (S)-dihydroorotate from bicarbonate: step 2/3. Catalyzes the condensation of carbamoyl phosphate and aspartate to form carbamoyl aspartate and inorganic phosphate, the committed step in the de novo pyrimidine nucleotide biosynthesis pathway. The protein is Aspartate carbamoyltransferase catalytic subunit of Corynebacterium jeikeium (strain K411).